The chain runs to 377 residues: O-phospho-L-seryl-tRNA:Cys-tRNA synthase (377 aa).

Pyridoxal 5'-phosphate-binding positions include A83–R84, N188, and S211–H213. At K214 the chain carries N6-(pyridoxal phosphate)lysine.

Belongs to the SepCysS family. In terms of assembly, homodimer. Interacts with SepRS. Pyridoxal 5'-phosphate serves as cofactor.

The enzyme catalyses O-phospho-L-seryl-tRNA(Cys) + hydrogen sulfide + H(+) = L-cysteinyl-tRNA(Cys) + phosphate. Its function is as follows. Converts O-phospho-L-seryl-tRNA(Cys) (Sep-tRNA(Cys)) to L-cysteinyl-tRNA(Cys) (Cys-tRNA(Cys)). In Methanothermobacter thermautotrophicus (strain ATCC 29096 / DSM 1053 / JCM 10044 / NBRC 100330 / Delta H) (Methanobacterium thermoautotrophicum), this protein is O-phospho-L-seryl-tRNA:Cys-tRNA synthase.